A 24-amino-acid polypeptide reads, in one-letter code: 60 kDa chaperonin, mitochondrial (24 aa).

This sequence belongs to the chaperonin (HSP60) family. As to quaternary structure, forms a single seven-member ring complex, in tight association with the p63 protein. Testis.

The protein resides in the mitochondrion. Its function is as follows. Implicated in mitochondrial protein import and macromolecular assembly. May facilitate the correct folding of imported proteins. May also prevent misfolding and promote the refolding and proper assembly of unfolded polypeptides generated under stress conditions in the mitochondrial matrix. This is 60 kDa chaperonin, mitochondrial from Heliothis virescens (Tobacco budworm moth).